Reading from the N-terminus, the 219-residue chain is MEMILNNTEARVLGCLIEKEMTTPEYYPLSLNALANACNQKSNRNPVMGMDETVVAAALDGLRFKQLAVLAADGGRVAKYRHLLAEKLGLLPPELAVVCELLLRGPQTLGELRTRAERMHPFADLAGVEAVLRELMERGEPLVTRLARQAGRKEARYAHLLGGDIQGDAEERMFDAEGPCTEMTGGDDRIARLEEQVTSLREEVAMLRRVVDDFKGQFE.

Belongs to the UPF0502 family.

This chain is UPF0502 protein Ppro_2903, found in Pelobacter propionicus (strain DSM 2379 / NBRC 103807 / OttBd1).